The chain runs to 404 residues: S-adenosylmethionine synthase (404 aa).

Residues M1–V13 are compositionally biased toward polar residues. Residues M1–K20 are disordered. Position 17 (H17) interacts with ATP. D19 contacts Mg(2+). E45 provides a ligand contact to K(+). Residues E58 and Q101 each contribute to the L-methionine site. A flexible loop region spans residues Q101–R111. ATP is bound by residues D172–K174, R245–F246, D254, R260–K261, A277, and K281. D254 contacts L-methionine. Residue K285 participates in L-methionine binding.

The protein belongs to the AdoMet synthase family. In terms of assembly, homotetramer; dimer of dimers. Requires Mg(2+) as cofactor. It depends on K(+) as a cofactor.

The protein resides in the cytoplasm. It catalyses the reaction L-methionine + ATP + H2O = S-adenosyl-L-methionine + phosphate + diphosphate. Its pathway is amino-acid biosynthesis; S-adenosyl-L-methionine biosynthesis; S-adenosyl-L-methionine from L-methionine: step 1/1. Functionally, catalyzes the formation of S-adenosylmethionine (AdoMet) from methionine and ATP. The overall synthetic reaction is composed of two sequential steps, AdoMet formation and the subsequent tripolyphosphate hydrolysis which occurs prior to release of AdoMet from the enzyme. This chain is S-adenosylmethionine synthase, found in Chlorobium limicola (strain DSM 245 / NBRC 103803 / 6330).